An 83-amino-acid chain; its full sequence is U20-theraphotoxin-Cg1a 1 (83 aa).

Residues 1–21 (MKVSVLITLAVLGVMFVWTSA) form the signal peptide. Residues 22-47 (AELEERGSDQPAWLKSLERIFQSEER) constitute a propeptide that is removed on maturation. Cystine bridges form between cysteine 49-cysteine 63, cysteine 56-cysteine 68, and cysteine 62-cysteine 76.

Belongs to the neurotoxin 10 (Hwtx-1) family. 40 (Jztx-35) subfamily. As to expression, expressed by the venom gland.

It localises to the secreted. Its function is as follows. Probable ion channel inhibitor. In Chilobrachys guangxiensis (Chinese earth tiger tarantula), this protein is U20-theraphotoxin-Cg1a 1.